Consider the following 345-residue polypeptide: Nuclear hormone receptor family nhr-176 (345 aa).

Positions 7-82 (IQPCLVCGQS…AGMLEKMVFS (76 aa)) form a DNA-binding region, nuclear receptor. The NR C4-type zinc-finger motif lies at 10-30 (CLVCGQSSNSILFGAPSCRAC). Residues 46-65 (NNCLGECSFAKKSMKPCQSC) form an NR C4-type; degenerate zinc finger. Residues 92 to 342 (FEKSILEELE…CPLYAISTNS (251 aa)) enclose the NR LBD domain. The segment at 331-342 (SGCPLYAISTNS) is AF-2.

The protein resides in the nucleus. Nuclear hormone receptor. Binds to xenobiotic ligand thiabendazole (TBZ), in vitro. Involved in the up-regulation of phase I detoxification genes, such as probable cytochrome P450 cyp-35d1, in response to TBZ. The sequence is that of Nuclear hormone receptor family nhr-176 from Caenorhabditis elegans.